A 328-amino-acid chain; its full sequence is D-cysteine desulfhydrase (328 aa).

Lysine 51 bears the N6-(pyridoxal phosphate)lysine mark.

This sequence belongs to the ACC deaminase/D-cysteine desulfhydrase family. Homodimer. It depends on pyridoxal 5'-phosphate as a cofactor.

The catalysed reaction is D-cysteine + H2O = hydrogen sulfide + pyruvate + NH4(+) + H(+). Its function is as follows. Catalyzes the alpha,beta-elimination reaction of D-cysteine and of several D-cysteine derivatives. It could be a defense mechanism against D-cysteine. This is D-cysteine desulfhydrase from Escherichia coli (strain SMS-3-5 / SECEC).